The primary structure comprises 467 residues: Argininosuccinate lyase (467 aa).

The protein belongs to the lyase 1 family. Argininosuccinate lyase subfamily.

It localises to the cytoplasm. It carries out the reaction 2-(N(omega)-L-arginino)succinate = fumarate + L-arginine. The protein operates within amino-acid biosynthesis; L-arginine biosynthesis; L-arginine from L-ornithine and carbamoyl phosphate: step 3/3. The protein is Argininosuccinate lyase of Rhizobium johnstonii (strain DSM 114642 / LMG 32736 / 3841) (Rhizobium leguminosarum bv. viciae).